The sequence spans 465 residues: 3-isopropylmalate dehydratase large subunit (465 aa).

Residues Cys346, Cys406, and Cys409 each contribute to the [4Fe-4S] cluster site.

Belongs to the aconitase/IPM isomerase family. LeuC type 1 subfamily. Heterodimer of LeuC and LeuD. The cofactor is [4Fe-4S] cluster.

The catalysed reaction is (2R,3S)-3-isopropylmalate = (2S)-2-isopropylmalate. Its pathway is amino-acid biosynthesis; L-leucine biosynthesis; L-leucine from 3-methyl-2-oxobutanoate: step 2/4. Its function is as follows. Catalyzes the isomerization between 2-isopropylmalate and 3-isopropylmalate, via the formation of 2-isopropylmaleate. In Leptospira interrogans serogroup Icterohaemorrhagiae serovar copenhageni (strain Fiocruz L1-130), this protein is 3-isopropylmalate dehydratase large subunit.